We begin with the raw amino-acid sequence, 317 residues long: MKLGFLIPNHPNEKRVALLPEHVKGFNNELVIETGFGETLGISDAEYVKVGCTIASREEIFKTCEGIFSLKVLKPQDYKHIREGQIIVGWTHPEGSGKIFMEEQGIPKNLIIVDLDNIHPSIYYKDYVIPMEWIPSNFVRKNSYIAGYASTMHAVMNYGSIPTSETKVAILGSGNVSQGAFSAISKFNPDIRMFYRKTMNQLKDELEEFDIIINGIEMDNPNKHILTLEDQMRLKKNCLIIDAAANLGKAIEGARHTTASDPIYNKDGKYYYAVNNSPSIFYRQSSKAISEAFSKHVYSKELEFYLDVIAEVEEMIV.

Pyruvate contacts are provided by Arg15, Lys71, and His92. 172–177 is a binding site for NADP(+); sequence GSGNVS.

The protein belongs to the AlaDH/PNT family. CEOS subfamily. As to quaternary structure, homotetramer.

The catalysed reaction is N(5)-[1(S)-1-carboxyethyl]-L-ornithine + NADP(+) + H2O = L-ornithine + pyruvate + NADPH + H(+). In terms of biological role, catalyzes the NADPH-dependent reductive condensation between pyruvic acid and the side chain amino group of L-ornithine to form N(5)-(L-1-carboxyethyl)-L-ornithine. To a lesser extent, can also use L-lysine as substrate (yielding N(6)-(L-1-carboxyethyl)-L-lysine), and the D-isomers of the 2 basic amino acids. Can use alpha-keto acids other than pyruvate, e.g. glyoxylate. The protein is N(5)-(carboxyethyl)ornithine synthase (ceo) of Clostridium botulinum (strain Hall / ATCC 3502 / NCTC 13319 / Type A).